The chain runs to 165 residues: Destrin (165 aa).

Residue A2 is modified to N-acetylalanine. Position 3 is a phosphoserine (S3). One can recognise an ADF-H domain in the interval 4–153 (GVQVADEVCR…NRTCIAEKLG (150 aa)). At K19 the chain carries N6-acetyllysine. The short motif at 30-34 (KKRKK) is the Nuclear localization signal element.

It belongs to the actin-binding proteins ADF family. In terms of processing, ISGylated. In terms of tissue distribution, widely expressed. Not found in skeletal muscle.

In terms of biological role, actin-depolymerizing protein. Severs actin filaments (F-actin) and binds to actin monomers (G-actin). Acts in a pH-independent manner. The protein is Destrin (Dstn) of Mus musculus (Mouse).